The primary structure comprises 301 residues: Acetyl-coenzyme A carboxylase carboxyl transferase subunit beta (301 aa).

The 270-residue stretch at 25–294 (LWIKDPSTGE…NSDAPAPQKP (270 aa)) folds into the CoA carboxyltransferase N-terminal domain.

Belongs to the AccD/PCCB family. In terms of assembly, acetyl-CoA carboxylase is a heterohexamer composed of biotin carboxyl carrier protein (AccB), biotin carboxylase (AccC) and two subunits each of ACCase subunit alpha (AccA) and ACCase subunit beta (AccD).

The protein localises to the cytoplasm. The catalysed reaction is N(6)-carboxybiotinyl-L-lysyl-[protein] + acetyl-CoA = N(6)-biotinyl-L-lysyl-[protein] + malonyl-CoA. The protein operates within lipid metabolism; malonyl-CoA biosynthesis; malonyl-CoA from acetyl-CoA: step 1/1. Its function is as follows. Component of the acetyl coenzyme A carboxylase (ACC) complex. Biotin carboxylase (BC) catalyzes the carboxylation of biotin on its carrier protein (BCCP) and then the CO(2) group is transferred by the transcarboxylase to acetyl-CoA to form malonyl-CoA. The sequence is that of Acetyl-coenzyme A carboxylase carboxyl transferase subunit beta from Brucella abortus (strain 2308).